The sequence spans 621 residues: Amino-acid acetyltransferase, mitochondrial (621 aa).

The transit peptide at 1–77 (MIPRAPPSTQ…RSYLASFGVQ (77 aa)) directs the protein to the mitochondrion. A disordered region spans residues 213 to 233 (PKPGSEEESEPGFSPPETHIY). The 177-residue stretch at 424–600 (LPIRVVRSVS…GSAGLSFIED (177 aa)) folds into the N-acetyltransferase domain.

This sequence belongs to the acetyltransferase family.

It localises to the mitochondrion. It catalyses the reaction L-glutamate + acetyl-CoA = N-acetyl-L-glutamate + CoA + H(+). It participates in amino-acid biosynthesis; L-arginine biosynthesis; N(2)-acetyl-L-ornithine from L-glutamate: step 1/4. Functionally, N-acetylglutamate synthase involved in arginine biosynthesis. The sequence is that of Amino-acid acetyltransferase, mitochondrial (ARG2) from Coprinopsis cinerea (strain Okayama-7 / 130 / ATCC MYA-4618 / FGSC 9003) (Inky cap fungus).